We begin with the raw amino-acid sequence, 194 residues long: Lachesicidin (194 aa).

A signal peptide spans 1–22 (MQGFFWKTWLVLAVCGTPASLA). Residues 23–160 (HRPLSYGEAL…DEEKDQPKRV (138 aa)) constitute a propeptide that is removed on maturation. 2 cysteine pairs are disulfide-bonded: Cys-79-Cys-90 and Cys-101-Cys-118. A compositionally biased stretch (acidic residues) spans 125–154 (EEEEEEEEEEQKAEAENDEEVEKEKEDEEK). A disordered region spans residues 125–157 (EEEEEEEEEEQKAEAENDEEVEKEKEDEEKDQP).

This sequence belongs to the cathelicidin family. As to expression, expressed by the venom gland.

Its subcellular location is the secreted. It is found in the target cell membrane. In terms of biological role, potent antimicrobial peptide against Gram-negative and Gram-positive bacteria. Adopts an amphipathic alpha helical conformation, that may allow to partition into the target membrane. Low hemolytic activities have been observed on mammalian cells. The chain is Lachesicidin from Lachesis muta rhombeata (Bushmaster).